A 301-amino-acid polypeptide reads, in one-letter code: Probable aspartoacylase (301 aa).

The Zn(2+) site is built by histidine 13 and glutamate 16. Substrate is bound by residues arginine 54 and 61-62 (NR). Histidine 105 serves as a coordination point for Zn(2+). Substrate-binding residues include glutamate 163 and tyrosine 273.

It belongs to the AspA/AstE family. Aspartoacylase subfamily. It depends on Zn(2+) as a cofactor.

It carries out the reaction an N-acyl-L-aspartate + H2O = a carboxylate + L-aspartate. This Prochlorococcus marinus (strain AS9601) protein is Probable aspartoacylase.